A 66-amino-acid chain; its full sequence is Large ribosomal subunit protein uL29 (66 aa).

Belongs to the universal ribosomal protein uL29 family.

The chain is Large ribosomal subunit protein uL29 from Borreliella burgdorferi (strain ZS7) (Borrelia burgdorferi).